The following is a 312-amino-acid chain: Ribosomal RNA small subunit methyltransferase H (312 aa).

S-adenosyl-L-methionine-binding positions include 35-37 (GGH), Asp55, Phe79, Asp100, and Gln107.

The protein belongs to the methyltransferase superfamily. RsmH family.

The protein localises to the cytoplasm. It carries out the reaction cytidine(1402) in 16S rRNA + S-adenosyl-L-methionine = N(4)-methylcytidine(1402) in 16S rRNA + S-adenosyl-L-homocysteine + H(+). Functionally, specifically methylates the N4 position of cytidine in position 1402 (C1402) of 16S rRNA. The chain is Ribosomal RNA small subunit methyltransferase H from Azoarcus sp. (strain BH72).